We begin with the raw amino-acid sequence, 264 residues long: Type III pantothenate kinase 2 (264 aa).

Residue 6–13 participates in ATP binding; that stretch reads DVGNTFTV. Substrate is bound by residues tyrosine 100 and 107–110; that span reads GADR. The active-site Proton acceptor is the aspartate 109. Aspartate 129 lines the K(+) pocket. Threonine 132 lines the ATP pocket. Threonine 184 serves as a coordination point for substrate.

This sequence belongs to the type III pantothenate kinase family. As to quaternary structure, homodimer. NH4(+) serves as cofactor. It depends on K(+) as a cofactor.

The protein localises to the cytoplasm. The catalysed reaction is (R)-pantothenate + ATP = (R)-4'-phosphopantothenate + ADP + H(+). Its pathway is cofactor biosynthesis; coenzyme A biosynthesis; CoA from (R)-pantothenate: step 1/5. Catalyzes the phosphorylation of pantothenate (Pan), the first step in CoA biosynthesis. In Symbiobacterium thermophilum (strain DSM 24528 / JCM 14929 / IAM 14863 / T), this protein is Type III pantothenate kinase 2.